The following is a 161-amino-acid chain: Peroxynitrite isomerase (161 aa).

Residues 17–23 (GSWVGRG) carry the GXWXGXG motif. His152 lines the heme b pocket.

Belongs to the nitrobindin family. As to quaternary structure, homodimer. Heme b serves as cofactor.

It catalyses the reaction peroxynitrite = nitrate. It participates in nitrogen metabolism. Functionally, heme-binding protein able to scavenge peroxynitrite and to protect free L-tyrosine against peroxynitrite-mediated nitration, by acting as a peroxynitrite isomerase that converts peroxynitrite to nitrate. Therefore, this protein likely plays a role in peroxynitrite sensing and in the detoxification of reactive nitrogen and oxygen species (RNS and ROS, respectively). Is able to bind nitric oxide (NO) in vitro, but may act as a sensor of peroxynitrite levels in vivo. The polypeptide is Peroxynitrite isomerase (Mycobacterium leprae (strain TN)).